A 146-amino-acid chain; its full sequence is MSDERYAASDGGGTEVGSGTRGRTTVVTKPATRPQRPTGKRSRQRAANASNTGANVEVEESSTQAAIAKEGKVKKPKKSADRSANPIVFIYNYLKQVVGEMRKVIWPNRKQMLTYTSVVLAFLAFMVALVGLADFGLAKLVLLVFG.

The disordered stretch occupies residues 1–81 (MSDERYAASD…KVKKPKKSAD (81 aa)). Positions 10–20 (DGGGTEVGSGT) are enriched in gly residues. Residues 45–54 (RAANASNTGA) show a composition bias toward polar residues. The span at 69–81 (KEGKVKKPKKSAD) shows a compositional bias: basic and acidic residues. Residues 118-138 (VVLAFLAFMVALVGLADFGLA) traverse the membrane as a helical segment.

This sequence belongs to the SecE/SEC61-gamma family. Component of the Sec protein translocase complex. Heterotrimer consisting of SecY, SecE and SecG subunits. The heterotrimers can form oligomers, although 1 heterotrimer is thought to be able to translocate proteins. Interacts with the ribosome. Interacts with SecDF, and other proteins may be involved. Interacts with SecA.

The protein localises to the cell membrane. Essential subunit of the Sec protein translocation channel SecYEG. Clamps together the 2 halves of SecY. May contact the channel plug during translocation. The polypeptide is Protein translocase subunit SecE (Mycobacterium leprae (strain TN)).